We begin with the raw amino-acid sequence, 156 residues long: 6,7-dimethyl-8-ribityllumazine synthase (156 aa).

5-amino-6-(D-ribitylamino)uracil is bound by residues Phe23, 57–59 (AFE), and 81–83 (AVI). (2S)-2-hydroxy-3-oxobutyl phosphate is bound at residue 86-87 (AT). The Proton donor role is filled by His89. Phe114 serves as a coordination point for 5-amino-6-(D-ribitylamino)uracil. Arg128 is a (2S)-2-hydroxy-3-oxobutyl phosphate binding site.

The protein belongs to the DMRL synthase family.

The catalysed reaction is (2S)-2-hydroxy-3-oxobutyl phosphate + 5-amino-6-(D-ribitylamino)uracil = 6,7-dimethyl-8-(1-D-ribityl)lumazine + phosphate + 2 H2O + H(+). The protein operates within cofactor biosynthesis; riboflavin biosynthesis; riboflavin from 2-hydroxy-3-oxobutyl phosphate and 5-amino-6-(D-ribitylamino)uracil: step 1/2. Its function is as follows. Catalyzes the formation of 6,7-dimethyl-8-ribityllumazine by condensation of 5-amino-6-(D-ribitylamino)uracil with 3,4-dihydroxy-2-butanone 4-phosphate. This is the penultimate step in the biosynthesis of riboflavin. In Campylobacter concisus (strain 13826), this protein is 6,7-dimethyl-8-ribityllumazine synthase.